A 1397-amino-acid chain; its full sequence is MNSFQIIELIGSGSYGKVYKAIHNLSKCTVALKIISVMNIENGLPVEVKYLMKLRDCKNIVHLIEYFYSNDDKLVMVFEYLEYDLWKFISPKNKYMTLSCTKFFIHQLLEGLDELHSQKIMHLDIKPSNLLINPRFDLKIADFGFTTYIGNPHLAHQVISLFYRPPELLMGSRNYGPEVDIWSVGCIIVEMLTGFYMFAGSNDSLQLELIFKTFGTPTEKNWPGISKLSGYSPYLGSKSKKYPSKSLKDISKFKSFSNSTLDIILRMLTLCPKNRISTKEALNHPWFFEDPIASPPLDDIINCLVSRPVKISKQHQKTNNCNNNNGSYDIIPPNSILVPKRSSSQQAALQTQQVVDVDLQYLILKAEQQQIQYQKLVLQTSVPNHIYKEVYEVNQLLKQYILRLKQQKVNLNNNNLNNNNNNLYGNNNHNNNNNNNNNNNNNNNNNNYNNNNNNHNNNYNHDNNNNNNYNNNNYKNNNNSNNNFSFNNSNNNNNNNNNNNRNNRNNNNNNNNNNNNNNYNNNSNNNSYNNNFNNGFNNNDNINDDNNNNNSYNNVNNNNINNNNNNNNGFNGFNNYGNNFNNSNNNGNQFGANNNSFNNTDFSNDSNYGSYCNGLMDLINNNSMYNGGNYYMNNASFHQRIQEHIQKIQQQQLQQMEDQQQEKLNFRDYHPLSIPSQHHNTSSSDTHNNNNNNYNNNNNNNNNINNNNINSIHNQSSDHNHFIPNNGFTNENNNNHCINNMNNSNNNNNNNIGNIGSNGGSINEMGNNNNNNNNNNNNNNNNNNNNNNINANHNRNNNNGSNDFSDFNGNQMVINSYNNNSNNNGNINGNNNNGNGNINGIIGNNNNNNSNNNNNTSFNGNRTTTTTTTSSNFNNINNNNNNSNNNNKNNNNKNNNNNNNNNNNNNNNNNNNNNNNNSNNNSINNNTNNNNNNNNNNNGNGLTSSYANHFQYNHPPFNISNAPHPIPFLNNQSIPNSNYQFLNRFSFSNYSNNNSNGLANNYQNPFGHGATNSNNNNSGNNDHVFGHNTFNFNQNNNNNNNNNNNNNNNNNNNNNNNSNNNSNNNNYNSNNNDNSNSNSNNNNNNNNNNNNSLFNNFNTHNNSINRGNNSFDSFNNGFNHLKNNNNNINNNNNDINNNNNNNNNNNNNNGITKNNTQFGPNILSSTQTSHNSPVSLTPISVSSSSFSNYSPTSFSSSSMESLSSSSEFLSSESLSFTNSNQFSPLLNSASQDINNNSRSSRHRSKLNIDTKGNNNNNNNNKNNNNNNNNNNNNNNNNNNNNNNSNNINNDNNNNSNNNSNSNNNNSNSNNNNNSNNNNNNSFGLKRYVDDNEEQLLANQKKKKNIKSSPLPSASSSQQSQTQQQHQIQQQSQTQQQSQTQKIENNDGLSVENPIVLD.

The region spanning 4–287 (FQIIELIGSG…TKEALNHPWF (284 aa)) is the Protein kinase domain. Residues 10 to 18 (IGSGSYGKV) and Lys-33 each bind ATP. Asp-124 (proton acceptor) is an active-site residue. Disordered regions lie at residues 412-567 (NNNN…NNNN), 671-728 (PLSI…NNGF), 763-831 (NEMG…NGNN), 845-949 (NNNN…YANH), 996-1101 (NGLA…NTHN), 1115-1174 (NNGF…NSPV), 1227-1324 (NSAS…SFGL), and 1340-1397 (KKKK…IVLD). The segment covering 676 to 715 (SQHHNTSSSDTHNNNNNNYNNNNNNNNNINNNNINSIHNQ) has biased composition (low complexity). Composition is skewed to low complexity over residues 845–941 (NNNN…NGNG), 1012–1021 (NSNNNNSGNN), 1028–1101 (NTFN…NTHN), and 1115–1155 (NNGF…TKNN). A compositionally biased stretch (polar residues) spans 1156-1171 (TQFGPNILSSTQTSHN). Low complexity-rich tracts occupy residues 1253 to 1321 (NNNN…NNNS) and 1354 to 1380 (SSSQ…SQTQ).

Belongs to the protein kinase superfamily. CMGC Ser/Thr protein kinase family. CDC2/CDKX subfamily.

The enzyme catalyses L-seryl-[protein] + ATP = O-phospho-L-seryl-[protein] + ADP + H(+). The catalysed reaction is L-threonyl-[protein] + ATP = O-phospho-L-threonyl-[protein] + ADP + H(+). The sequence is that of Probable cyclin-dependent serine/threonine-protein kinase DDB_G0292550 from Dictyostelium discoideum (Social amoeba).